A 648-amino-acid chain; its full sequence is Replication restart protein PriA (648 aa).

A Helicase ATP-binding domain is found at 131-297 (TIFNESNKPT…KTHKYQLVTL (167 aa)). ATP is bound at residue 144–151 (GVTGSGKT). The short motif at 240-243 (DEEH) is the DEAH box element. Cys-358, Cys-361, Cys-367, Cys-370, Cys-385, Cys-388, Cys-398, and Cys-401 together coordinate Zn(2+). The region spanning 393–548 (KIFSSCPECL…SFFTNELEIR (156 aa)) is the Helicase C-terminal domain.

This sequence belongs to the helicase family. PriA subfamily. In terms of assembly, component of the replication restart primosome. Zn(2+) is required as a cofactor.

The catalysed reaction is Couples ATP hydrolysis with the unwinding of duplex DNA by translocating in the 3'-5' direction.. It carries out the reaction ATP + H2O = ADP + phosphate + H(+). Its function is as follows. Initiates the restart of stalled replication forks, which reloads the replicative helicase on sites other than the origin of replication. Recognizes and binds to abandoned replication forks and remodels them to uncover a helicase loading site. Promotes assembly of the primosome at these replication forks. The protein is Replication restart protein PriA of Rickettsia typhi (strain ATCC VR-144 / Wilmington).